The primary structure comprises 158 residues: Phosphopantetheine adenylyltransferase (158 aa).

S8 is a binding site for substrate. ATP is bound by residues 8–9 (SF) and H16. Residues K40, T72, and R86 each coordinate substrate. Residues 87–89 (GLR), E97, and 122–128 (HSFLSSS) contribute to the ATP site.

This sequence belongs to the bacterial CoaD family. As to quaternary structure, homohexamer. The cofactor is Mg(2+).

The protein localises to the cytoplasm. It catalyses the reaction (R)-4'-phosphopantetheine + ATP + H(+) = 3'-dephospho-CoA + diphosphate. The protein operates within cofactor biosynthesis; coenzyme A biosynthesis; CoA from (R)-pantothenate: step 4/5. Reversibly transfers an adenylyl group from ATP to 4'-phosphopantetheine, yielding dephospho-CoA (dPCoA) and pyrophosphate. This Prochlorococcus marinus (strain NATL1A) protein is Phosphopantetheine adenylyltransferase.